Here is a 132-residue protein sequence, read N- to C-terminus: Small ribosomal subunit protein uS8 (132 aa).

This sequence belongs to the universal ribosomal protein uS8 family. As to quaternary structure, part of the 30S ribosomal subunit. Contacts proteins S5 and S12.

Its function is as follows. One of the primary rRNA binding proteins, it binds directly to 16S rRNA central domain where it helps coordinate assembly of the platform of the 30S subunit. The protein is Small ribosomal subunit protein uS8 of Exiguobacterium sp. (strain ATCC BAA-1283 / AT1b).